The following is a 93-amino-acid chain: YcgL domain-containing protein VV1_0131 (93 aa).

One can recognise a YcgL domain in the interval 1–84 (MLCSIYKSSK…PPENLLQQHK (84 aa)). Residues 72–93 (LPPPPENLLQQHKERKAQQKND) are disordered.

In Vibrio vulnificus (strain CMCP6), this protein is YcgL domain-containing protein VV1_0131.